A 515-amino-acid polypeptide reads, in one-letter code: Probable cytosol aminopeptidase (515 aa).

2 residues coordinate Mn(2+): lysine 274 and aspartate 279. Residue lysine 286 is part of the active site. Positions 297, 356, and 358 each coordinate Mn(2+). The active site involves arginine 360.

Belongs to the peptidase M17 family. It depends on Mn(2+) as a cofactor.

It localises to the cytoplasm. It carries out the reaction Release of an N-terminal amino acid, Xaa-|-Yaa-, in which Xaa is preferably Leu, but may be other amino acids including Pro although not Arg or Lys, and Yaa may be Pro. Amino acid amides and methyl esters are also readily hydrolyzed, but rates on arylamides are exceedingly low.. It catalyses the reaction Release of an N-terminal amino acid, preferentially leucine, but not glutamic or aspartic acids.. Functionally, presumably involved in the processing and regular turnover of intracellular proteins. Catalyzes the removal of unsubstituted N-terminal amino acids from various peptides. The polypeptide is Probable cytosol aminopeptidase (Desulforapulum autotrophicum (strain ATCC 43914 / DSM 3382 / VKM B-1955 / HRM2) (Desulfobacterium autotrophicum)).